The chain runs to 279 residues: MNLPAATALFTPSWHAELELAYARCGATTRPVLRRHLGPLRVQKHLYAEGPEVCQHIIVHPPGGIAGGDRLAISARVDSGAWAQLTSPGAAKWYRATGPASQTLNLQVAPGATLEWLPQETIVFSAAQAELTTRIELQGDARLFYWDIIALGRPASGERFEQGHFQAHLDLYRDGRPLWHERQRIGGGDGLLDSPIGLDGQPVFATLLVTGEIDSELLERCRALAHPVRGDLSQLPGLLVARCLASEALQARAWLIELWRLLRPALLGREARPPRIWNT.

The protein belongs to the UreD family. UreD, UreF and UreG form a complex that acts as a GTP-hydrolysis-dependent molecular chaperone, activating the urease apoprotein by helping to assemble the nickel containing metallocenter of UreC. The UreE protein probably delivers the nickel.

The protein resides in the cytoplasm. Functionally, required for maturation of urease via the functional incorporation of the urease nickel metallocenter. The sequence is that of Urease accessory protein UreD from Pseudomonas fluorescens (strain ATCC BAA-477 / NRRL B-23932 / Pf-5).